We begin with the raw amino-acid sequence, 599 residues long: UPF0313 protein UNCMA_01890 (599 aa).

The Radical SAM core domain occupies 281 to 557 (EDIPALRTVR…RALLQYKNPE (277 aa)). 3 residues coordinate [4Fe-4S] cluster: Cys299, Cys303, and Cys306.

The protein belongs to the UPF0313 family. [4Fe-4S] cluster is required as a cofactor.

This is UPF0313 protein UNCMA_01890 from Methanocella arvoryzae (strain DSM 22066 / NBRC 105507 / MRE50).